The sequence spans 676 residues: Envelope glycoprotein (676 aa).

The N-terminal stretch at 1-32 (MEGLSLLQLPRDKFRKSSFFVWVIILFQKAFS) is a signal peptide. Residues 33 to 650 (MPLGVVTNST…DDNWWTGWRQ (618 aa)) lie on the Extracellular side of the membrane. N40 carries an N-linked (GlcNAc...) asparagine; by host glycan. Disulfide bonds link C53–C609, C108–C135, C121–C147, C511–C556, and C601–C608. Residues 54–201 (KDHLASTDQL…TFLQSPPIRE (148 aa)) form a receptor-binding region. N-linked (GlcNAc...) asparagine; by host glycosylation is found at N204, N208, N238, N257, N268, N296, and N314. The interval 305-485 (ELSFETLSLN…STSNGLITST (181 aa)) is mucin-like region. The disordered stretch occupies residues 312–351 (SLNETEDDDATSSRTTKGRISDRATRKYSDLVPKDSPGMV). Residues 330–344 (RISDRATRKYSDLVP) are compositionally biased toward basic and acidic residues. N366 carries N-linked (GlcNAc...) asparagine; by host glycosylation. A disordered region spans residues 406-458 (SSSQILSSSPTMAPSPETQTSTTYTPKLPVMTTEEPTTPPRNSPGSTTEAPTL). 2 stretches are compositionally biased toward polar residues: residues 415–430 (PTMA…TTYT) and 448–458 (SPGSTTEAPTL). N-linked (GlcNAc...) asparagine; by host glycosylation is present at N463. Positions 524–539 (HNAAGIAWIPYFGPGA) are fusion peptide. A coiled-coil region spans residues 554–595 (LVCGLRQLANETTQALQLFLRATTELRTYTILNRKAIDFLLR). A glycan (N-linked (GlcNAc...) asparagine; by host) is linked at N563. Residues 615–634 (WTKNITDKINQIIHDFIDNP) adopt a coiled-coil conformation. N618 carries an N-linked (GlcNAc...) asparagine; by host glycan. Residues 651–671 (WIPAGIGITGIIIAIIALLCV) form a helical membrane-spanning segment. 2 S-palmitoyl cysteine; by host lipidation sites follow: C670 and C672. The Cytoplasmic portion of the chain corresponds to 672–676 (CKLLC).

The protein belongs to the filoviruses glycoprotein family. As to quaternary structure, homotrimer; each monomer consists of a GP1 and a GP2 subunit linked by disulfide bonds. The resulting peplomers (GP1,2) protrude from the virus surface as spikes. Interacts with host integrin alpha-V/ITGAV. Interacts with host CLEC10A. Binds also to host CD209 and CLEC4M/DC-SIGN(R). Interacts with host FOLR1. Interacts with BST2; this interaction inhibits the antiviral effect of BST2 and this allows viral release from infected cells. Interacts with host FCN1; this interaction enhances viral entry. Interacts with host TLR4; this interaction induces cell death in T-lymphocytes or proinflammatory cytokines and SOCS1 production in monocytes. In terms of assembly, interacts with host entry receptor NPC1. GP1 and GP2delta are part of GP1,2delta soluble complexes released by ectodomain shedding. The signal peptide region modulates GP's high mannose glycosylation, thereby determining the efficiency of the interactions with DC-SIGN(R). In terms of processing, N-glycosylated. Post-translationally, O-glycosylated in the mucin-like region. Palmitoylation of GP2 is not required for its function. In terms of processing, specific enzymatic cleavages in vivo yield mature proteins. The precursor is processed into GP1 and GP2 by host cell furin in the trans Golgi, and maybe by other host proteases, to yield the mature GP1 and GP2 proteins. The cleavage site corresponds to the furin optimal cleavage sequence [KR]-X-[KR]-R. This cleavage does not seem to be required for function. After the internalization of the virus into cell endosomes, GP1 C-terminus is removed by the endosomal proteases cathepsin B, cathepsin L, or both, leaving a 19-kDa N-terminal fragment which is further digested by cathepsin B. Proteolytic processing of GP1,2 by host ADAM17 can remove the transmembrane anchor of GP2 and leads to shedding of complexes consisting in GP1 and truncated GP2 (GP1,2delta).

The protein resides in the virion membrane. It is found in the host cell membrane. The protein localises to the secreted. In terms of biological role, trimeric GP1,2 complexes form the virion surface spikes and mediate the viral entry processes, with GP1 acting as the receptor-binding subunit and GP2 as the membrane fusion subunit. At later times of infection, down-regulates the expression of various host cell surface molecules that are essential for immune surveillance and cell adhesion. Down-modulates several integrins including ITGA1, ITGA2, ITGA3, ITGA4, ITGA5, ITGA6, ITGAV and ITGB1. This decrease in cell adhesion molecules may lead to cell detachment, contributing to the disruption of blood vessel integrity and hemorrhages developed during infection (cytotoxicity). Interacts with host TLR4 and thereby stimulates the differentiation and activation of monocytes leading to bystander death of T-lymphocytes. Down-regulates as well the function of host natural killer cells. Counteracts the antiviral effect of host BST2/tetherin that restricts release of progeny virions from infected cells. However, cooperates with VP40 and host BST2 to activate canonical NF-kappa-B pathway in a manner dependent on neddylation. Its function is as follows. Functions as a decoy for anti-GP1,2 antibodies thereby contributing to viral immune evasion. Interacts and activates host macrophages and dendritic cells inducing up-regulation of cytokine transcription. This effect is mediated throught activation of host TLR4. Functionally, responsible for binding to the receptor(s) on target cells. Interacts with CD209/DC-SIGN and CLEC4M/DC-SIGNR which act as cofactors for virus entry into dendritic cells (DCs) and endothelial cells. Binding to the macrophage specific lectin CLEC10A also seems to enhance virus infectivity. Interaction with FOLR1/folate receptor alpha may be a cofactor for virus entry in some cell types, although results are contradictory. Members of the Tyro3 receptor tyrosine kinase family also seem to be cell entry factors in filovirus infection. Once attached, the virions are internalized through clathrin-dependent endocytosis and/or macropinocytosis. After internalization of the virus into the endosomes of the host cell, proteolysis of GP1 by two cysteine proteases, CTSB/cathepsin B and CTSL/cathepsin L removes the glycan cap and allows GP1 binding to the host entry receptor NPC1. NPC1-binding, Ca(2+) and acidic pH induce a conformational change of GP2, which unmasks its fusion peptide and permit membranes fusion. Acts as a class I viral fusion protein. Under the current model, the protein has at least 3 conformational states: pre-fusion native state, pre-hairpin intermediate state, and post-fusion hairpin state. During viral and target cell membrane fusion, the coiled coil regions (heptad repeats) assume a trimer-of-hairpins structure, positioning the fusion peptide in close proximity to the C-terminal region of the ectodomain. The formation of this structure appears to drive apposition and subsequent fusion of viral and target cell membranes. Responsible for penetration of the virus into the cell cytoplasm by mediating the fusion of the membrane of the endocytosed virus particle with the endosomal membrane. Low pH in endosomes induces an irreversible conformational change in GP2, releasing the fusion hydrophobic peptide. This chain is Envelope glycoprotein (GP), found in Sudan ebolavirus (strain Maleo-79) (SEBOV).